The chain runs to 166 residues: Regulator of ribonuclease activity A (166 aa).

This sequence belongs to the RraA family. Homotrimer. Binds to both RNA-binding sites in the C-terminal region of Rne and to RhlB.

Its subcellular location is the cytoplasm. In terms of biological role, globally modulates RNA abundance by binding to RNase E (Rne) and regulating its endonucleolytic activity. Can modulate Rne action in a substrate-dependent manner by altering the composition of the degradosome. Modulates RNA-binding and helicase activities of the degradosome. In Actinobacillus succinogenes (strain ATCC 55618 / DSM 22257 / CCUG 43843 / 130Z), this protein is Regulator of ribonuclease activity A.